Here is a 373-residue protein sequence, read N- to C-terminus: UDP-glucose 4-epimerase 3 (373 aa).

27–58 (SVLVTGGAGYIGTHTVLRLLEKGFAVTVVDNF) is an NAD(+) binding site. S153 contacts substrate. The active-site Proton acceptor is Y177.

This sequence belongs to the NAD(P)-dependent epimerase/dehydratase family. It depends on NAD(+) as a cofactor.

The enzyme catalyses UDP-alpha-D-glucose = UDP-alpha-D-galactose. It functions in the pathway carbohydrate metabolism; galactose metabolism. Catalyzes the interconversion between UDP-glucose and UDP-galactose. The sequence is that of UDP-glucose 4-epimerase 3 (UGE-3) from Oryza sativa subsp. japonica (Rice).